A 392-amino-acid polypeptide reads, in one-letter code: MVGELYRFITDFGVIEGYIIKEEPNYYLIKLKNGYNIGIKKSQIKEMENLNEKIKVGQFPKRKPKGIGNLGFIYTGGTIGSKVDYLTGGVSAIMDIEELLAIADLPYDIKIIDSPFVKFSEDLNPKDWVEIVKSIERTYKKGAEGIIVAHGTDTMHFSSAYAYYALENPIPIAFTGAQRSSDRASTDAVINLFASSIYANSNIGEVAIVMHETINDDTAIAIRGISARKMHSTRRDAFKSINEEPLARIYYPSGKLEIINKKYRKRSDKEMVAKPYLDTKGALIWVYPGFDPSILEYYRNYRGIIIAGTGMGHTSKELIPMLKELSKDLFIGITTQCIYGITHPYVYSRGRELSKFATYLQGTPEKNYVKLLYVLGKESDLDGIKKEMKRLP.

Positions 68 to 391 (GNLGFIYTGG…DGIKKEMKRL (324 aa)) constitute an Asparaginase/glutaminase domain. Catalysis depends on residues threonine 78, threonine 152, aspartate 153, and lysine 229.

This sequence belongs to the asparaginase 1 family. GatD subfamily. In terms of assembly, heterodimer of GatD and GatE.

The catalysed reaction is L-glutamyl-tRNA(Gln) + L-glutamine + ATP + H2O = L-glutaminyl-tRNA(Gln) + L-glutamate + ADP + phosphate + H(+). In terms of biological role, allows the formation of correctly charged Gln-tRNA(Gln) through the transamidation of misacylated Glu-tRNA(Gln) in organisms which lack glutaminyl-tRNA synthetase. The reaction takes place in the presence of glutamine and ATP through an activated gamma-phospho-Glu-tRNA(Gln). The GatDE system is specific for glutamate and does not act on aspartate. The chain is Glutamyl-tRNA(Gln) amidotransferase subunit D (gatD) from Nanoarchaeum equitans (strain Kin4-M).